Consider the following 200-residue polypeptide: Holliday junction resolvase RecU (200 aa).

Positions 1–25 (MTIRYPNGKRYNQASQPHKTPIKKH) are disordered. 4 residues coordinate Mg(2+): T85, D87, E100, and Q119.

This sequence belongs to the RecU family. Mg(2+) is required as a cofactor.

It is found in the cytoplasm. It catalyses the reaction Endonucleolytic cleavage at a junction such as a reciprocal single-stranded crossover between two homologous DNA duplexes (Holliday junction).. Endonuclease that resolves Holliday junction intermediates in genetic recombination. Cleaves mobile four-strand junctions by introducing symmetrical nicks in paired strands. Promotes annealing of linear ssDNA with homologous dsDNA. Required for DNA repair, homologous recombination and chromosome segregation. This Bacillus thuringiensis (strain Al Hakam) protein is Holliday junction resolvase RecU.